A 319-amino-acid polypeptide reads, in one-letter code: HTH-type transcriptional regulator YidZ (319 aa).

In terms of domain architecture, HTH lysR-type spans Leu8–Thr65. Positions Val25 to Ala44 form a DNA-binding region, H-T-H motif.

Belongs to the LysR transcriptional regulatory family.

In terms of biological role, involved in anaerobic NO protection. The chain is HTH-type transcriptional regulator YidZ from Escherichia coli O139:H28 (strain E24377A / ETEC).